Here is a 178-residue protein sequence, read N- to C-terminus: Large ribosomal subunit protein uL6 (178 aa).

Belongs to the universal ribosomal protein uL6 family. Part of the 50S ribosomal subunit.

In terms of biological role, this protein binds to the 23S rRNA, and is important in its secondary structure. It is located near the subunit interface in the base of the L7/L12 stalk, and near the tRNA binding site of the peptidyltransferase center. This is Large ribosomal subunit protein uL6 from Buchnera aphidicola subsp. Schizaphis graminum (strain Sg).